We begin with the raw amino-acid sequence, 680 residues long: DNA-directed RNA polymerase subunit beta' (680 aa).

Zn(2+) is bound by residues cysteine 69, cysteine 71, cysteine 87, and cysteine 90. Positions 489, 491, and 493 each coordinate Mg(2+).

This sequence belongs to the RNA polymerase beta' chain family. RpoC1 subfamily. In terms of assembly, in plastids the minimal PEP RNA polymerase catalytic core is composed of four subunits: alpha, beta, beta', and beta''. When a (nuclear-encoded) sigma factor is associated with the core the holoenzyme is formed, which can initiate transcription. The cofactor is Mg(2+). It depends on Zn(2+) as a cofactor.

Its subcellular location is the plastid. The protein resides in the chloroplast. It carries out the reaction RNA(n) + a ribonucleoside 5'-triphosphate = RNA(n+1) + diphosphate. DNA-dependent RNA polymerase catalyzes the transcription of DNA into RNA using the four ribonucleoside triphosphates as substrates. This is DNA-directed RNA polymerase subunit beta' from Ranunculus macranthus (Large buttercup).